We begin with the raw amino-acid sequence, 153 residues long: Regulatory protein RecX (153 aa).

The protein belongs to the RecX family.

The protein resides in the cytoplasm. Modulates RecA activity. The sequence is that of Regulatory protein RecX from Syntrophotalea carbinolica (strain DSM 2380 / NBRC 103641 / GraBd1) (Pelobacter carbinolicus).